A 163-amino-acid chain; its full sequence is Small heat shock protein C4 (163 aa).

Residues 53 to 163 (YNNKILSPRT…QSKAKKIKIS (111 aa)) form the sHSP domain.

This sequence belongs to the small heat shock protein (HSP20) family.

The polypeptide is Small heat shock protein C4 (hspc4-1) (Rickettsia felis (strain ATCC VR-1525 / URRWXCal2) (Rickettsia azadi)).